A 404-amino-acid chain; its full sequence is Cysteine desulfurase IscS (404 aa).

Residues 75 to 76 (AT), N155, Q183, and 203 to 205 (SAH) each bind pyridoxal 5'-phosphate. At K206 the chain carries N6-(pyridoxal phosphate)lysine. Pyridoxal 5'-phosphate is bound at residue T243. C328 serves as the catalytic Cysteine persulfide intermediate. Residue C328 coordinates [2Fe-2S] cluster.

It belongs to the class-V pyridoxal-phosphate-dependent aminotransferase family. NifS/IscS subfamily. In terms of assembly, homodimer. Forms a heterotetramer with IscU, interacts with other sulfur acceptors. It depends on pyridoxal 5'-phosphate as a cofactor.

Its subcellular location is the cytoplasm. The catalysed reaction is (sulfur carrier)-H + L-cysteine = (sulfur carrier)-SH + L-alanine. The protein operates within cofactor biosynthesis; iron-sulfur cluster biosynthesis. In terms of biological role, master enzyme that delivers sulfur to a number of partners involved in Fe-S cluster assembly, tRNA modification or cofactor biosynthesis. Catalyzes the removal of elemental sulfur atoms from cysteine to produce alanine. Functions as a sulfur delivery protein for Fe-S cluster synthesis onto IscU, an Fe-S scaffold assembly protein, as well as other S acceptor proteins. The sequence is that of Cysteine desulfurase IscS from Neisseria meningitidis serogroup A / serotype 4A (strain DSM 15465 / Z2491).